The primary structure comprises 113 residues: Pancreatic progenitor cell differentiation and proliferation factor B (113 aa).

Belongs to the PPDPF family.

In terms of biological role, probable regulator of exocrine pancreas development. The sequence is that of Pancreatic progenitor cell differentiation and proliferation factor B (ppdpf-b) from Xenopus laevis (African clawed frog).